The chain runs to 176 residues: 3-hydroxydecanoyl-[acyl-carrier-protein] dehydratase (176 aa).

Histidine 75 is a catalytic residue.

This sequence belongs to the thioester dehydratase family. FabA subfamily. As to quaternary structure, homodimer.

Its subcellular location is the cytoplasm. It catalyses the reaction a (3R)-hydroxyacyl-[ACP] = a (2E)-enoyl-[ACP] + H2O. The enzyme catalyses (3R)-hydroxydecanoyl-[ACP] = (2E)-decenoyl-[ACP] + H2O. The catalysed reaction is (2E)-decenoyl-[ACP] = (3Z)-decenoyl-[ACP]. The protein operates within lipid metabolism; fatty acid biosynthesis. Functionally, necessary for the introduction of cis unsaturation into fatty acids. Catalyzes the dehydration of (3R)-3-hydroxydecanoyl-ACP to E-(2)-decenoyl-ACP and then its isomerization to Z-(3)-decenoyl-ACP. Can catalyze the dehydratase reaction for beta-hydroxyacyl-ACPs with saturated chain lengths up to 16:0, being most active on intermediate chain length. This is 3-hydroxydecanoyl-[acyl-carrier-protein] dehydratase from Glaesserella parasuis serovar 5 (strain SH0165) (Haemophilus parasuis).